The primary structure comprises 197 residues: Phosphoheptose isomerase (197 aa).

In terms of domain architecture, SIS spans 34 to 196; the sequence is MVQCLLGGNK…DRTLFPQDEQ (163 aa). 49 to 51 provides a ligand contact to substrate; sequence NGG. Zn(2+) is bound by residues His58 and Glu62. Residues Glu62, 91-92, 117-119, Ser122, and Gln172 each bind substrate; these read ND and STS. Positions 172 and 180 each coordinate Zn(2+).

This sequence belongs to the SIS family. GmhA subfamily. Homotetramer. The cofactor is Zn(2+).

It localises to the cytoplasm. It catalyses the reaction 2 D-sedoheptulose 7-phosphate = D-glycero-alpha-D-manno-heptose 7-phosphate + D-glycero-beta-D-manno-heptose 7-phosphate. Its pathway is carbohydrate biosynthesis; D-glycero-D-manno-heptose 7-phosphate biosynthesis; D-glycero-alpha-D-manno-heptose 7-phosphate and D-glycero-beta-D-manno-heptose 7-phosphate from sedoheptulose 7-phosphate: step 1/1. Functionally, catalyzes the isomerization of sedoheptulose 7-phosphate in D-glycero-D-manno-heptose 7-phosphate. The polypeptide is Phosphoheptose isomerase (Shewanella piezotolerans (strain WP3 / JCM 13877)).